We begin with the raw amino-acid sequence, 310 residues long: Cytochrome f (310 aa).

The signal sequence occupies residues 1-27 (MRRHLSLFLGSLVIGLALLIAPAASWA). Heme is bound by residues tyrosine 28, cysteine 48, cysteine 51, and histidine 52. Residues 277–297 (IYGLLAFFAAVALAQIMLVLK) form a helical membrane-spanning segment.

The protein belongs to the cytochrome f family. The 4 large subunits of the cytochrome b6-f complex are cytochrome b6, subunit IV (17 kDa polypeptide, PetD), cytochrome f and the Rieske protein, while the 4 small subunits are PetG, PetL, PetM and PetN. The complex functions as a dimer. Heme is required as a cofactor.

Its subcellular location is the cellular thylakoid membrane. Its function is as follows. Component of the cytochrome b6-f complex, which mediates electron transfer between photosystem II (PSII) and photosystem I (PSI), cyclic electron flow around PSI, and state transitions. The sequence is that of Cytochrome f from Synechococcus sp. (strain CC9605).